A 66-amino-acid polypeptide reads, in one-letter code: Surface composition regulator (66 aa).

The protein belongs to the GlgS family.

Major determinant of cell surface composition. Negatively regulates motility, adhesion and synthesis of biofilm exopolysaccharides. This is Surface composition regulator from Escherichia coli O139:H28 (strain E24377A / ETEC).